Here is a 146-residue protein sequence, read N- to C-terminus: Heat-stable 19 kDa antigen (146 aa).

A signal peptide spans 1 to 20; that stretch reads MKFSLLSAIAAAVFVPFTSA.

It belongs to the cerato-platanin family. Glycosylated.

It localises to the secreted. In Coccidioides posadasii (strain C735) (Valley fever fungus), this protein is Heat-stable 19 kDa antigen (CSA).